Here is a 798-residue protein sequence, read N- to C-terminus: Serine/threonine-protein kinase haspin (798 aa).

Residues 1–110 (MAASLPGPGS…WKLRARPSLT (110 aa)) form a disordered region. Ser58 is modified (phosphoserine). The span at 59–70 (QSDDPDDPDDPD) shows a compositional bias: acidic residues. Ser93 bears the Phosphoserine; by AURKB mark. Residue Thr97 is modified to Phosphothreonine. Ser143 bears the Phosphoserine; by AURKB mark. Phosphoserine is present on Ser147. The disordered stretch occupies residues 275-350 (LVVGNGPEGP…KHQEATETSL (76 aa)). Residues 300–315 (CQERGLQEAVRREHQE) are compositionally biased toward basic and acidic residues. Positions 484–798 (LQRCEKIGEG…DLLCQHSLFK (315 aa)) constitute a Protein kinase domain. ATP is bound by residues 490 to 498 (IGEGVFGEV), Lys511, 606 to 611 (EFGGID), 649 to 654 (DLHWGN), and 687 to 689 (DYT). The active-site Proton acceptor is the Asp649.

This sequence belongs to the protein kinase superfamily. Ser/Thr protein kinase family. Haspin subfamily. Mg(2+) serves as cofactor. In terms of processing, autophosphorylated on both serine and threonine residues. Strongly phosphorylated during mitosis but this does not appear to significantly affect its intrinsic kinase activity. Phosphorylation by AURKB is required for full activity toward histone H3 at 'Ser-3' in mitosis. As to expression, strongly expressed in testis. Also present in thymus and bone marrow and low levels observed in prostate, intestine, lung, spleen and lymph node. Expressed in fetal skin, liver, kidney and small intestine and also in proliferating but not non-proliferating cell lines.

It is found in the nucleus. The protein localises to the chromosome. The protein resides in the cytoplasm. Its subcellular location is the cytoskeleton. It localises to the spindle. It catalyses the reaction L-seryl-[protein] + ATP = O-phospho-L-seryl-[protein] + ADP + H(+). It carries out the reaction L-threonyl-[protein] + ATP = O-phospho-L-threonyl-[protein] + ADP + H(+). With respect to regulation, constitutive activity that does not require phosphorylation. Specifically inhibited by 3-(1H-indazol-5-yl)-N-propylimidazo[1,2-b]pyridazin-6-amine (CHR-6494). In terms of biological role, serine/threonine-protein kinase that phosphorylates histone H3 at 'Thr-3' (H3T3ph) during mitosis. May act through H3T3ph to both position and modulate activation of AURKB and other components of the chromosomal passenger complex (CPC) at centromeres to ensure proper chromatid cohesion, metaphase alignment and normal progression through the cell cycle. This Homo sapiens (Human) protein is Serine/threonine-protein kinase haspin.